Here is a 97-residue protein sequence, read N- to C-terminus: Large ribosomal subunit protein uL23 (97 aa).

The protein belongs to the universal ribosomal protein uL23 family. In terms of assembly, part of the 50S ribosomal subunit. Contacts protein L29, and trigger factor when it is bound to the ribosome.

Its function is as follows. One of the early assembly proteins it binds 23S rRNA. One of the proteins that surrounds the polypeptide exit tunnel on the outside of the ribosome. Forms the main docking site for trigger factor binding to the ribosome. The chain is Large ribosomal subunit protein uL23 from Myxococcus xanthus (strain DK1622).